Reading from the N-terminus, the 137-residue chain is Basic phospholipase A2 DsM-S1 (137 aa).

The first 16 residues, 1–16 (MRTLWIVAVCLIGVEG), serve as a signal peptide directing secretion. 7 disulfides stabilise this stretch: cysteine 42-cysteine 131, cysteine 44-cysteine 60, cysteine 59-cysteine 111, cysteine 65-cysteine 137, cysteine 66-cysteine 104, cysteine 73-cysteine 97, and cysteine 91-cysteine 102. Residues tyrosine 43, glycine 45, and glycine 47 each coordinate Ca(2+). Histidine 63 is an active-site residue. Aspartate 64 is a binding site for Ca(2+). The active site involves aspartate 105.

The protein belongs to the phospholipase A2 family. Group II subfamily. D49 sub-subfamily. Ca(2+) is required as a cofactor. Expressed by the venom gland.

The protein localises to the secreted. The catalysed reaction is a 1,2-diacyl-sn-glycero-3-phosphocholine + H2O = a 1-acyl-sn-glycero-3-phosphocholine + a fatty acid + H(+). Its function is as follows. Snake venom phospholipase A2 (PLA2) that is neurotoxic. PLA2 catalyzes the calcium-dependent hydrolysis of the 2-acyl groups in 3-sn-phosphoglycerides. The protein is Basic phospholipase A2 DsM-S1 of Daboia siamensis (Eastern Russel's viper).